Here is a 114-residue protein sequence, read N- to C-terminus: uncharacterized protein (114 aa).

This is an uncharacterized protein from Mycobacterium bovis (strain ATCC BAA-935 / AF2122/97).